The primary structure comprises 449 residues: MKKKSFSIVIAGGGSTFTPGIVLMLLDHLEEFPIRKLKLYDNDKERQDRIAGACDVFIREKAPDIEFAATTDPEEAFTDVDFVMAHIRVGKYAMRALDEQIPLKYGVVGQETCGPGGIAYGMRSIGGVLEILDYMEKYSPDAWMLNYSNPAAIVAEATRRLRPNSKILNICDMPVGIEDRMAQILGLSSRKEMKVRYYGLNHFGWWTSIQDQEGNDLMPKLKEHVSQYGYIPKTEAEAVEASWNDTFAKARDVQAADPDTLPNTYLQYYLFPDDMVKKSNPNHTRANEVMEGREAFIFSQCDMITREQSSENSEIKIDDHASYIVDLARAIAYNTGERMLLIVENNGAIANFDPTAMVEVPCIVGSNGPEPITVGTIPQFQKGLMEQQVSVEKLTVEAWAEKSFQKLWQALILSKTVPNARVARLILEDLVEANKDFWPELDQSPTRIS.

An NAD(+)-binding site is contributed by 6–72 (FSIVIAGGGS…PDIEFAATTD (67 aa)). Substrate contacts are provided by R95 and N149. C171 provides a ligand contact to Mn(2+). Residue D172 is the Proton donor of the active site. H202 is a Mn(2+) binding site. Y265 (proton acceptor) is an active-site residue. R285 serves as a coordination point for substrate.

Belongs to the glycosyl hydrolase 4 family. As to quaternary structure, homotetramer. It depends on Mn(2+) as a cofactor. The cofactor is Fe(2+). Requires Co(2+) as cofactor. Ni(2+) is required as a cofactor. NAD(+) serves as cofactor.

The catalysed reaction is alpha-maltose 6'-phosphate + H2O = D-glucose 6-phosphate + D-glucose. Cellobiose-6'-phosphate and 6-phospho-beta-D-glucopyranoside are not substrates but competitive inhibitors of GlvA. Functionally, hydrolyzes maltose-6'-phosphate and trehalose-6'-phosphate. Is involved in the catabolism of alpha-glycosides accumulated via a phosphoenolpyruvate-dependent maltose phosphotransferase system (PEP-PTS). Is also able to significantly catalyze the hydrolysis of both 6-phospho-alpha- and 6-phospho-beta-glucosides containing activated leaving groups such as p-nitrophenol and does so with retention and inversion, respectively, of the substrate anomeric configuration. The chain is Maltose-6'-phosphate glucosidase (glvA) from Bacillus subtilis (strain 168).